Consider the following 284-residue polypeptide: 2,3,4,5-tetrahydropyridine-2,6-dicarboxylate N-succinyltransferase (284 aa).

Substrate-binding residues include arginine 111 and aspartate 148.

The protein belongs to the transferase hexapeptide repeat family. As to quaternary structure, homotrimer.

It is found in the cytoplasm. It carries out the reaction (S)-2,3,4,5-tetrahydrodipicolinate + succinyl-CoA + H2O = (S)-2-succinylamino-6-oxoheptanedioate + CoA. It participates in amino-acid biosynthesis; L-lysine biosynthesis via DAP pathway; LL-2,6-diaminopimelate from (S)-tetrahydrodipicolinate (succinylase route): step 1/3. This is 2,3,4,5-tetrahydropyridine-2,6-dicarboxylate N-succinyltransferase from Brucella anthropi (strain ATCC 49188 / DSM 6882 / CCUG 24695 / JCM 21032 / LMG 3331 / NBRC 15819 / NCTC 12168 / Alc 37) (Ochrobactrum anthropi).